The sequence spans 376 residues: Glutamate 5-kinase (376 aa).

K17 lines the ATP pocket. 3 residues coordinate substrate: S57, D144, and N156. Residue 176-177 participates in ATP binding; it reads TD. The PUA domain maps to 283–361; the sequence is KGQLVLDEGA…SEINQLLGYS (79 aa).

Belongs to the glutamate 5-kinase family.

It is found in the cytoplasm. The catalysed reaction is L-glutamate + ATP = L-glutamyl 5-phosphate + ADP. It functions in the pathway amino-acid biosynthesis; L-proline biosynthesis; L-glutamate 5-semialdehyde from L-glutamate: step 1/2. Functionally, catalyzes the transfer of a phosphate group to glutamate to form L-glutamate 5-phosphate. In Hydrogenovibrio crunogenus (strain DSM 25203 / XCL-2) (Thiomicrospira crunogena), this protein is Glutamate 5-kinase.